We begin with the raw amino-acid sequence, 329 residues long: GTP 3',8-cyclase (329 aa).

The Radical SAM core domain occupies 8 to 234; that stretch reads AFARKFYYLR…QLRQRSDGPA (227 aa). A GTP-binding site is contributed by Arg-17. Cys-24 and Cys-28 together coordinate [4Fe-4S] cluster. Tyr-30 contacts S-adenosyl-L-methionine. Residue Cys-31 participates in [4Fe-4S] cluster binding. Residue Arg-68 participates in GTP binding. Residue Gly-72 participates in S-adenosyl-L-methionine binding. Position 99 (Thr-99) interacts with GTP. Residue Ser-123 participates in S-adenosyl-L-methionine binding. Lys-160 serves as a coordination point for GTP. S-adenosyl-L-methionine is bound at residue Met-194. Cys-257 and Cys-260 together coordinate [4Fe-4S] cluster. Residue 262–264 coordinates GTP; it reads RLR. Cys-274 is a [4Fe-4S] cluster binding site.

The protein belongs to the radical SAM superfamily. MoaA family. Monomer and homodimer. It depends on [4Fe-4S] cluster as a cofactor.

It catalyses the reaction GTP + AH2 + S-adenosyl-L-methionine = (8S)-3',8-cyclo-7,8-dihydroguanosine 5'-triphosphate + 5'-deoxyadenosine + L-methionine + A + H(+). Its pathway is cofactor biosynthesis; molybdopterin biosynthesis. Functionally, catalyzes the cyclization of GTP to (8S)-3',8-cyclo-7,8-dihydroguanosine 5'-triphosphate. The protein is GTP 3',8-cyclase of Escherichia coli O45:K1 (strain S88 / ExPEC).